The primary structure comprises 767 residues: 5-methyltetrahydropteroyltriglutamate--homocysteine methyltransferase (767 aa).

5-methyltetrahydropteroyltri-L-glutamate contacts are provided by residues 17 to 20 (RELK) and lysine 117. L-homocysteine is bound by residues 442–444 (IGS) and glutamate 495. Residues 442–444 (IGS) and glutamate 495 contribute to the L-methionine site. Residues 526–527 (RC) and tryptophan 572 each bind 5-methyltetrahydropteroyltri-L-glutamate. Aspartate 610 is a binding site for L-homocysteine. Aspartate 610 serves as a coordination point for L-methionine. Glutamate 616 serves as a coordination point for 5-methyltetrahydropteroyltri-L-glutamate. The Zn(2+) site is built by histidine 653, cysteine 655, and glutamate 677. Histidine 706 serves as the catalytic Proton donor. Zn(2+) is bound at residue cysteine 738.

The protein belongs to the vitamin-B12 independent methionine synthase family. It depends on Zn(2+) as a cofactor.

The enzyme catalyses 5-methyltetrahydropteroyltri-L-glutamate + L-homocysteine = tetrahydropteroyltri-L-glutamate + L-methionine. It participates in amino-acid biosynthesis; L-methionine biosynthesis via de novo pathway; L-methionine from L-homocysteine (MetE route): step 1/1. Functionally, catalyzes the transfer of a methyl group from 5-methyltetrahydrofolate to homocysteine resulting in methionine formation. The protein is 5-methyltetrahydropteroyltriglutamate--homocysteine methyltransferase of Bifidobacterium animalis subsp. lactis (strain AD011).